Reading from the N-terminus, the 542-residue chain is Amino-acid acetyltransferase, mitochondrial (542 aa).

The N-terminal 14 residues, 1–14, are a transit peptide targeting the mitochondrion; the sequence is MLFRRLLTTKVGYH. The N-acetyltransferase domain occupies 368–534; sequence AGSAQLPAHK…LREYITYVRD (167 aa).

Belongs to the acetyltransferase family.

Its subcellular location is the mitochondrion. It carries out the reaction L-glutamate + acetyl-CoA = N-acetyl-L-glutamate + CoA + H(+). Its pathway is amino-acid biosynthesis; L-arginine biosynthesis; N(2)-acetyl-L-ornithine from L-glutamate: step 1/4. In terms of biological role, N-acetylglutamate synthase involved in arginine biosynthesis. This Eremothecium gossypii (strain ATCC 10895 / CBS 109.51 / FGSC 9923 / NRRL Y-1056) (Yeast) protein is Amino-acid acetyltransferase, mitochondrial (ARG2).